We begin with the raw amino-acid sequence, 354 residues long: Replication-associated protein (354 aa).

The CRESS-DNA virus Rep endonuclease domain occupies 11–114; sequence SHRSPNTFLT…PLALFERGTF (104 aa). The RCR-1 motif lies at 18-21; it reads FLTY. 2 residues coordinate a divalent metal cation: E52 and H62. Residues 60–65 carry the RCR-2 motif; it reads CLHALI. The For DNA cleavage activity role is filled by Y100. The short motif at 100–103 is the RCR-3 element; it reads YITK. An a divalent metal cation-binding site is contributed by E104. An oligomerization region spans residues 175 to 187; sequence SANKLFPDIQEEF. 228 to 235 serves as a coordination point for ATP; that stretch reads GPTRTGKS. The segment at 251-269 is transactivation; it reads VDWSSYNEDTIYNIVDDIP. A Nuclear localization signal motif is present at residues 291-302; it reads KYGKKKKVQMKS.

It belongs to the geminiviridae Rep protein family. As to quaternary structure, homooligomer. Rep binds to repeated DNA motifs (iterons). Forms the O-complex, which is a Rep-DNA complex involved in the initiation of RCR. Part of the C- and V-complexes which are RepA-Rep-DNA complexes involved in the c-sense and v-sense transcription. Requires Mg(2+) as cofactor. The cofactor is Mn(2+).

The protein localises to the host nucleus. Its function is as follows. Essential for the replication of viral ssDNA. The closed circular ssDNA genome is first converted to a superhelical dsDNA. Rep binds a specific region at the genome origin of replication. It introduces an endonucleolytic nick within the conserved sequence 5'-TAATATTAC-3' in the intergenic region of the genome present in all geminiviruses, thereby initiating the rolling circle replication (RCR). Following cleavage, binds covalently to the 5'-phosphate of DNA as a tyrosyl ester. The cleavage gives rise to a free 3'-OH that serves as a primer for the cellular DNA polymerase. The polymerase synthesizes the (+) strand DNA by rolling circle mechanism. After one round of replication, a Rep-catalyzed nucleotidyl transfer reaction releases a circular single-stranded virus genome, thereby terminating the replication. Displays origin-specific DNA cleavage, nucleotidyl transferase, ATPase and helicase activities. Acts as an inhibitor of C-sense gene transcription. The polypeptide is Replication-associated protein (Maize streak virus genotype C (isolate Set) (MSV)).